Reading from the N-terminus, the 417-residue chain is MSNLKITNVKTILTAPGGIDLAVVKIETNEPGLYGLGCATFTQRIFAVKSAIDEYMAPFLVGKDPTRIEDIWQSGVVSGYWRNGPIMNNALSGVDMALWDIKGKLAGMPVYDLLGGKCRDGIPLYCHTDGGDEVEVEDNIRARMEEGYQYVRCQMGMYGGAGTDDLKLIATQLARAKNIQPKRSPRSKTPGIYFDPDAYAKSVPRLFDHLRNKLGFGIEFIHDVHERVTPVTAINLAKTLEQYQLFYLEDPVAPENIDWLKMLRQQSSTPISMGELFVNVNEWKPLIDNRLIDYIRCHVSTIGGITPAKKLAVYSELNGVRTAWHGPGDISPVGVCANMHLDLSSPNFGIQEYTPMNDALRDVFPGCPEIDHGYAYLNDKPGLGIDIDEAKAAKYPCEGGIPSWTMARTPDGTASRP.

Residues Q43 and H127 each coordinate substrate. Y158 (proton donor/acceptor) is an active-site residue. D223 provides a ligand contact to Mg(2+). H225 acts as the Proton donor/acceptor in catalysis. Residues E249 and E275 each contribute to the Mg(2+) site. Residues E275, R296, H325, D329, and E352 each contribute to the substrate site.

Belongs to the mandelate racemase/muconate lactonizing enzyme family. GalD subfamily. Mg(2+) serves as cofactor.

It carries out the reaction D-gluconate = 2-dehydro-3-deoxy-D-gluconate + H2O. In terms of biological role, has low D-gluconate dehydratase activity (in vitro), suggesting that it has no significant role in D-gluconate degradation in vivo. Has no detectable activity with a panel of 70 other acid sugars (in vitro). The polypeptide is D-galactonate dehydratase family member SeV_A0456 (Salmonella virchow (strain SL491)).